A 422-amino-acid chain; its full sequence is Ornithine decarboxylase (422 aa).

Lys-71 is subject to N6-(pyridoxal phosphate)lysine. Pyridoxal 5'-phosphate-binding positions include Ser-203, Gly-240, and 275 to 278; that span reads EPGR. 331–332 is a binding site for substrate; that stretch reads FD. Cys-359 serves as the catalytic Proton donor; shared with dimeric partner. A substrate-binding site is contributed by Asp-360. Pyridoxal 5'-phosphate is bound at residue Tyr-388.

This sequence belongs to the Orn/Lys/Arg decarboxylase class-II family. Homodimer. Only the dimer is catalytically active, as the active sites are constructed of residues from both monomers. Pyridoxal 5'-phosphate serves as cofactor.

It catalyses the reaction L-ornithine + H(+) = putrescine + CO2. Its pathway is amine and polyamine biosynthesis; putrescine biosynthesis via L-ornithine pathway; putrescine from L-ornithine: step 1/1. With respect to regulation, inhibited by antizyme (AZ) in response to polyamine levels. AZ inhibits the assembly of the functional homodimer by binding to ODC monomers and targeting them for ubiquitin-independent proteolytic destruction by the 26S proteasome. Catalyzes the first and rate-limiting step of polyamine biosynthesis that converts ornithine into putrescine, which is the precursor for the polyamines, spermidine and spermine. Polyamines are essential for cell proliferation and are implicated in cellular processes, ranging from DNA replication to apoptosis. The protein is Ornithine decarboxylase of Caenorhabditis elegans.